Consider the following 722-residue polypeptide: Neprilysin-1 (722 aa).

A signal peptide spans 1–17; sequence MAVALLVALCVVSSRMA. Residues 32–722 enclose the Peptidase M13 domain; that stretch reads VCNSPVCQKA…MNPTHKCLLW (691 aa). Cystine bridges form between Cys33–Cys38, Cys56–Cys707, Cys64–Cys667, Cys120–Cys378, and Cys589–Cys719. Asn100, Asn184, Asn207, and Asn424 each carry an N-linked (GlcNAc...) asparagine glycan. Zn(2+) is bound at residue His552. Glu553 is an active-site residue. Zn(2+) is bound at residue His556. Asn609 carries an N-linked (GlcNAc...) asparagine glycan. Glu614 is a binding site for Zn(2+). Asp618 (proton donor) is an active-site residue.

Belongs to the peptidase M13 family. Requires Zn(2+) as cofactor. Post-translationally, contains 5 disulfide bonds. As to expression, expressed by the venom gland.

The protein resides in the secreted. This chain is Neprilysin-1, found in Trittame loki (Brush-footed trapdoor spider).